We begin with the raw amino-acid sequence, 981 residues long: Ubiquitin carboxyl-terminal hydrolase 15 (981 aa).

Ala-2 carries the post-translational modification N-acetylalanine. The mediates interaction with SART3 stretch occupies residues 2 to 223 (AEGGAADLDT…KNEDGTWPRG (222 aa)). Positions 7–118 (ADLDTQRSDI…GQEPIARKVV (112 aa)) constitute a DUSP domain. Positions 216-237 (EDGTWPRGPSTPKSPGASNFST) are disordered. Phosphothreonine is present on Thr-226. Residues 226-237 (TPKSPGASNFST) are compositionally biased toward polar residues. Phosphoserine is present on residues Ser-229 and Ser-242. Residues 289–933 (CGLSNLGNTC…AAYVLFYQRQ (645 aa)) enclose the USP domain. Cys-298 (nucleophile) is an active-site residue. Position 602 is a phosphothreonine (Thr-602). Positions 629–694 (GSLHCCKDQN…GGDNDSENGL (66 aa)) are disordered. Acidic residues predominate over residues 656–673 (METDEPDDESSQDQELPS). His-891 functions as the Proton acceptor in the catalytic mechanism. Positions 952–981 (SAATGIPLESDEDSNDNDNDIENENCMHTN) are disordered. The segment covering 960-974 (ESDEDSNDNDNDIEN) has biased composition (acidic residues). A phosphoserine mark is found at Ser-961 and Ser-965.

It belongs to the peptidase C19 family. In terms of assembly, a homodimer structure has been reported; however it is unclear whether the protein form a homodimer in vivo. Identified in a complex with the COP9 signalosome complex (CSN). Interacts with SMAD1, SMAD2 and SMAD3; the interaction is direct. Forms a complex with SMURF2 and SMAD7. Interacts with TGFBR1. Interacts with SART3; the interaction is direct. May interact with RNF20 and RNF40. May interact with PRKN. Interacts with INCA1. (Microbial infection) Interacts with human papillomavirus type 16 protein E6. In terms of processing, phosphorylated. Phosphorylation protects against ubiquitination and subsequent degradation by the proteasome. Post-translationally, ubiquitinated, leading to degradation by the proteasome. Expressed in skeletal muscle, kidney, heart, placenta, liver, thymus, lung, and ovary, with little or no expression in other tissues.

It localises to the cytoplasm. The protein localises to the nucleus. It is found in the mitochondrion. The catalysed reaction is Thiol-dependent hydrolysis of ester, thioester, amide, peptide and isopeptide bonds formed by the C-terminal Gly of ubiquitin (a 76-residue protein attached to proteins as an intracellular targeting signal).. Its function is as follows. Hydrolase that removes conjugated ubiquitin from target proteins and regulates various pathways such as the TGF-beta receptor signaling, NF-kappa-B and RNF41/NRDP1-PRKN pathways. Acts as a key regulator of TGF-beta receptor signaling pathway, but the precise mechanism is still unclear: according to a report, acts by promoting deubiquitination of monoubiquitinated R-SMADs (SMAD1, SMAD2 and/or SMAD3), thereby alleviating inhibition of R-SMADs and promoting activation of TGF-beta target genes. According to another reports, regulates the TGF-beta receptor signaling pathway by mediating deubiquitination and stabilization of TGFBR1, leading to an enhanced TGF-beta signal. Able to mediate deubiquitination of monoubiquitinated substrates, 'Lys-27'-, 'Lys-48'- and 'Lys-63'-linked polyubiquitin chains. May also regulate gene expression and/or DNA repair through the deubiquitination of histone H2B. Acts as an inhibitor of mitophagy by counteracting the action of parkin (PRKN): hydrolyzes cleavage of 'Lys-48'- and 'Lys-63'-linked polyubiquitin chains attached by parkin on target proteins such as MFN2, thereby reducing parkin's ability to drive mitophagy. Acts as an associated component of COP9 signalosome complex (CSN) and regulates different pathways via this association: regulates NF-kappa-B by mediating deubiquitination of NFKBIA and deubiquitinates substrates bound to VCP. Involved in endosome organization by mediating deubiquitination of SQSTM1: ubiquitinated SQSTM1 forms a molecular bridge that restrains cognate vesicles in the perinuclear region and its deubiquitination releases target vesicles for fast transport into the cell periphery. Acts as a negative regulator of antifungal immunity by mediating 'Lys-27'-linked deubiquitination of CARD9, thereby inactivating CARD9. Functionally, (Microbial infection) Protects APC and human papillomavirus type 16 protein E6 against degradation via the ubiquitin proteasome pathway. The polypeptide is Ubiquitin carboxyl-terminal hydrolase 15 (Homo sapiens (Human)).